The sequence spans 166 residues: Probable chemoreceptor glutamine deamidase CheD (166 aa).

The protein belongs to the CheD family.

The enzyme catalyses L-glutaminyl-[protein] + H2O = L-glutamyl-[protein] + NH4(+). Functionally, probably deamidates glutamine residues to glutamate on methyl-accepting chemotaxis receptors (MCPs), playing an important role in chemotaxis. This chain is Probable chemoreceptor glutamine deamidase CheD, found in Clostridium acetobutylicum (strain ATCC 824 / DSM 792 / JCM 1419 / IAM 19013 / LMG 5710 / NBRC 13948 / NRRL B-527 / VKM B-1787 / 2291 / W).